Consider the following 2605-residue polypeptide: Protein ABERRANT POLLEN TRANSMISSION 1 (2605 aa).

Residues 1 to 43 (MMLGLVQLLVGFVVAWEAVELVLRHGLLLSVFKLAILAALAAA) form the signal peptide. Residues 137 to 158 (STNKKKPAPRKPISTTTAKAKG) form a disordered region. N-linked (GlcNAc...) asparagine glycans are attached at residues Asn-232, Asn-320, Asn-348, Asn-516, Asn-587, Asn-628, Asn-696, Asn-779, Asn-1171, Asn-1318, and Asn-1459. A disordered region spans residues 305–326 (SASTVAEQKDEPSVDNKSAARS). Basic and acidic residues predominate over residues 311–326 (EQKDEPSVDNKSAARS). The interval 1761–1818 (MSKDGALSSVSSTSQPSEPQQIKSSESPPSNGSGKPDLTSSSENALKRSNNSDSEEEG) is disordered. Low complexity predominate over residues 1768 to 1781 (SSVSSTSQPSEPQQ). The segment covering 1782 to 1812 (IKSSESPPSNGSGKPDLTSSSENALKRSNNS) has biased composition (polar residues). Asn-1791, Asn-1810, Asn-2003, Asn-2280, and Asn-2291 each carry an N-linked (GlcNAc...) asparagine glycan. 2 disordered regions span residues 2269 to 2312 (VSTT…SSFD) and 2332 to 2361 (EGQT…REDK). The span at 2281-2300 (TSVAETNSPNNQSSKETTFA) shows a compositional bias: polar residues. Composition is skewed to basic and acidic residues over residues 2303 to 2312 (PELRRTSSFD) and 2343 to 2361 (DAAK…REDK). 2 N-linked (GlcNAc...) asparagine glycosylation sites follow: Asn-2468 and Asn-2564. The tract at residues 2574-2605 (TELEVAELPPRAPGYNTDSSSDSSSAETSPKD) is disordered.

This sequence belongs to the SABRE family. In terms of tissue distribution, mature pollen-specific.

Its subcellular location is the secreted. It localises to the golgi apparatus. Its function is as follows. May be involved in membrane trafficking. Required for tip growth in pollen tubes and root hairs. The protein is Protein ABERRANT POLLEN TRANSMISSION 1 of Zea mays (Maize).